Here is a 1662-residue protein sequence, read N- to C-terminus: Cortactin-binding protein 2 (1662 aa).

4 disordered regions span residues 1–23, 202–235, 365–439, and 453–477; these read MATD…AGAA, KKKT…EFDT, IGVS…LHPG, and GNAN…SPTS. Residues 118–275 adopt a coiled-coil conformation; it reads RKMQERMSAQ…EQLKRGSDSK (158 aa). The span at 385–395 shows a compositional bias: low complexity; that stretch reads PSTGSTPDPTS. Over residues 404–421 the composition is skewed to polar residues; that stretch reads AAPSTAQTPGITPQNSQA. Position 497 is an asymmetric dimethylarginine (Arg497). Positions 498-615 are disordered; it reads FTGPQAGAPP…SSPQLPPKPS (118 aa). 2 stretches are compositionally biased toward polar residues: residues 516 to 529 and 582 to 592; these read DVST…TSVK and TVASPPSSLPQ. ANK repeat units lie at residues 708-738, 742-771, 775-804, 808-837, and 841-870; these read GRPT…DINY, DGHS…QVNA, NGFT…NINH, GGQT…DRSV, and DGWT…PAHG. The tract at residues 871–897 is disordered; that stretch reads NSFSEEESESGVFDLDEGEESPEGKSK. The segment covering 874 to 891 has biased composition (acidic residues); sequence SEEESESGVFDLDEGEES. One copy of the ANK 6 repeat lies at 911-941; the sequence is EGWTAAHIAASKGFKNCLEILCRHGGLETER. Residues 1446–1473 are disordered; it reads KKKGESGAWRKVNTSPRRKSGRFSLPTW. Ser1523 is modified (phosphoserine). Positions 1614-1662 are disordered; that stretch reads VPRSKVTQCSQNTKRSSSSSNTRQIEINNNSKEENWNLHKNEHLEKPNK. Residues 1623–1637 are compositionally biased toward low complexity; the sequence is SQNTKRSSSSSNTRQ. Basic and acidic residues predominate over residues 1644-1662; it reads SKEENWNLHKNEHLEKPNK.

In terms of assembly, interacts with CTTN/cortactin SH3 domain. Interacts with STRN, STRN4/zinedin and MOB4/phocein; this interactions mediate the association with the STRIPAK core complex and may regulate dendritic spine distribution of the STRIPAK complex in hippocampal neurons. Activation of glutamate receptors weakens the interaction with STRN and STRN4.

It is found in the cytoplasm. Its subcellular location is the cell cortex. The protein resides in the cell projection. The protein localises to the dendritic spine. Regulates the dendritic spine distribution of CTTN/cortactin in hippocampal neurons, and thus controls dendritic spinogenesis and dendritic spine maintenance. Associates with the striatin-interacting phosphatase and kinase (STRIPAK) core complex to regulate dendritic spine distribution of the STRIPAK complex in hippocampal neurons. In Callithrix jacchus (White-tufted-ear marmoset), this protein is Cortactin-binding protein 2 (CTTNBP2).